The primary structure comprises 621 residues: MFPEYDVIVVGAGHAGCEAAAAAANMGSKVLLATMNMQTIAQMSCNPAMGGVAKGQIVREIDALGGLSGIVSDKSMIQFRMLNRSKGPAMWSPRSQNDRHMFAWEWRMQLEALPNVDFWQEMISGLIVKNGKVCGVRTGLGIEIPCKSVVLTNGTFLNGIIHIGEKKLGGGRTGEKAATGITEQLVELGFESGRMKTGTPPRVDGRSLDYSVMQEQEGDENPSKFSYSKQTTSLTKQRSCHITYTNQAVHDTLKEGFDRSPMFTGRIKGLGPRYCPSVEDKINRFAEKERHQIFVEPEGWNTVEVYVNGFSTSLPEDVQYKAIRKIAGFENAKMFRPGYAIEYDFFPPTQLQLSLETRLVKNLFFAGQINGTTGYEEAACQGLMAGINAHKAAKDHEALILKRSEAYIGVLIDDLVNKGTEEPYRMFTSRAEYRILLRQDNADLRLTPIGYEIGLATEERYQDMLLKKHNSEKLVEEIKNTKIKPETANEILEENGSAPIKEKVVLYNLLKRPNMEVSLFAEKVEEIKTLIEPYTQEEIEQAMIEVKYRDYIDKEEQMALKMTQLENMALNPDFDYKKIQALSLEAREKLSKLKPATLGQASRISGVNPADISILMIYMGR.

Residue 11 to 16 coordinates FAD; that stretch reads GAGHAG. 271-285 contacts NAD(+); that stretch reads GPRYCPSVEDKINRF.

It belongs to the MnmG family. In terms of assembly, homodimer. Heterotetramer of two MnmE and two MnmG subunits. The cofactor is FAD.

Its subcellular location is the cytoplasm. Functionally, NAD-binding protein involved in the addition of a carboxymethylaminomethyl (cmnm) group at the wobble position (U34) of certain tRNAs, forming tRNA-cmnm(5)s(2)U34. The protein is tRNA uridine 5-carboxymethylaminomethyl modification enzyme MnmG of Cytophaga hutchinsonii (strain ATCC 33406 / DSM 1761 / CIP 103989 / NBRC 15051 / NCIMB 9469 / D465).